A 452-amino-acid polypeptide reads, in one-letter code: Tubulin alpha-1 chain (452 aa).

Gln-11 provides a ligand contact to GTP. The residue at position 40 (Lys-40) is an N6-acetyllysine. The GTP site is built by Glu-71, Ser-140, Gly-144, Thr-145, Thr-179, Asn-206, and Asn-228. Residue Glu-71 coordinates Mg(2+). Glu-254 is an active-site residue. Residues 433 to 452 (EEVGVDSADAEGEEEEGDEY) are disordered.

This sequence belongs to the tubulin family. Dimer of alpha and beta chains. A typical microtubule is a hollow water-filled tube with an outer diameter of 25 nm and an inner diameter of 15 nM. Alpha-beta heterodimers associate head-to-tail to form protofilaments running lengthwise along the microtubule wall with the beta-tubulin subunit facing the microtubule plus end conferring a structural polarity. Microtubules usually have 13 protofilaments but different protofilament numbers can be found in some organisms and specialized cells. The cofactor is Mg(2+). Post-translationally, undergoes a tyrosination/detyrosination cycle, the cyclic removal and re-addition of a C-terminal tyrosine residue by the enzymes tubulin tyrosine carboxypeptidase (TTCP) and tubulin tyrosine ligase (TTL), respectively. In terms of processing, acetylation of alpha chains at Lys-40 stabilizes microtubules and affects affinity and processivity of microtubule motors. This modification has a role in multiple cellular functions, ranging from cell motility, cell cycle progression or cell differentiation to intracellular trafficking and signaling.

The protein localises to the cytoplasm. It localises to the cytoskeleton. It carries out the reaction GTP + H2O = GDP + phosphate + H(+). Tubulin is the major constituent of microtubules, a cylinder consisting of laterally associated linear protofilaments composed of alpha- and beta-tubulin heterodimers. Microtubules grow by the addition of GTP-tubulin dimers to the microtubule end, where a stabilizing cap forms. Below the cap, tubulin dimers are in GDP-bound state, owing to GTPase activity of alpha-tubulin. This Paracentrotus lividus (Common sea urchin) protein is Tubulin alpha-1 chain.